We begin with the raw amino-acid sequence, 556 residues long: Formate--tetrahydrofolate ligase (556 aa).

An ATP-binding site is contributed by 65–72; it reads TPAGEGKS.

It belongs to the formate--tetrahydrofolate ligase family.

The catalysed reaction is (6S)-5,6,7,8-tetrahydrofolate + formate + ATP = (6R)-10-formyltetrahydrofolate + ADP + phosphate. It participates in one-carbon metabolism; tetrahydrofolate interconversion. This chain is Formate--tetrahydrofolate ligase, found in Streptococcus pneumoniae serotype 19F (strain G54).